The chain runs to 492 residues: Probable beta-1,4-xylosyltransferase IRX14H (492 aa).

At methionine 1 to proline 33 the chain is on the cytoplasmic side. The helical; Signal-anchor for type II membrane protein transmembrane segment at serine 34–phenylalanine 54 threads the bilayer. The Lumenal segment spans residues arginine 55 to serine 492. 3 N-linked (GlcNAc...) asparagine glycosylation sites follow: asparagine 99, asparagine 196, and asparagine 314. Positions isoleucine 457–serine 492 are disordered. Residues serine 473–aspartate 484 are compositionally biased toward basic and acidic residues.

This sequence belongs to the glycosyltransferase 43 family. Expressed in developing interfascicular fibers and xylem cells in stems and developing secondary xylem in roots.

The protein localises to the golgi apparatus membrane. In terms of biological role, involved in the synthesis of the hemicellulose glucuronoxylan, a major component of secondary cell walls. Probably involved in the elongation of glucuronoxylan xylosyl backbone. The protein is Probable beta-1,4-xylosyltransferase IRX14H (IRX14H) of Arabidopsis thaliana (Mouse-ear cress).